The following is a 514-amino-acid chain: Probable cytosol aminopeptidase (514 aa).

Lys-266 and Asp-271 together coordinate Mn(2+). Residue Lys-278 is part of the active site. Positions 289, 357, and 359 each coordinate Mn(2+). Arg-361 is a catalytic residue.

It belongs to the peptidase M17 family. Requires Mn(2+) as cofactor.

The protein localises to the cytoplasm. It catalyses the reaction Release of an N-terminal amino acid, Xaa-|-Yaa-, in which Xaa is preferably Leu, but may be other amino acids including Pro although not Arg or Lys, and Yaa may be Pro. Amino acid amides and methyl esters are also readily hydrolyzed, but rates on arylamides are exceedingly low.. The enzyme catalyses Release of an N-terminal amino acid, preferentially leucine, but not glutamic or aspartic acids.. Presumably involved in the processing and regular turnover of intracellular proteins. Catalyzes the removal of unsubstituted N-terminal amino acids from various peptides. The polypeptide is Probable cytosol aminopeptidase (Oleidesulfovibrio alaskensis (strain ATCC BAA-1058 / DSM 17464 / G20) (Desulfovibrio alaskensis)).